Here is a 393-residue protein sequence, read N- to C-terminus: uncharacterized protein (393 aa).

67–74 (GPDGMGKS) contacts ATP.

This is an uncharacterized protein from Mycobacterium tuberculosis (strain CDC 1551 / Oshkosh).